We begin with the raw amino-acid sequence, 405 residues long: MTIDTRALGFGSSDRAVYAADPWTSRGRLYPEDGSPTRSDFQRDRDRIVHTTAFRRLKHKTQVFIAQDGDHYRTRLTHTIEVAQIARALARALKLDEDLAEGVALVHDFGHTPFGHTGEDALHEVLLPYGGFDHNAQSLRIVTKLERRYAEFDGINLTWESLEGLVKHNGPLLTPDDVGTRGPVPQPILDYCELHDLELATYASLEAQVAAIADDIAYNTHDIDDGLRSGYLTFDMLEEIPFLAGLMAEVRARYPHLEPSRFTHEIMRRQITRMVEDVIAVAQERLSLLRPESAADIRAADRVIAAFSGQMAETDSQIKAMLFKRIYRNPDIMRIRAGAAQIVTDLFAAYMANPKEMQSHYWVDHIAGLADAPKARHVGDYLAGMTDTYAISAHRRLFDHTPDLR.

One can recognise an HD domain in the interval 75–219 (RLTHTIEVAQ…AAIADDIAYN (145 aa)).

The protein belongs to the dGTPase family. Type 2 subfamily.

This is Deoxyguanosinetriphosphate triphosphohydrolase-like protein from Rhizobium leguminosarum bv. trifolii (strain WSM2304).